Reading from the N-terminus, the 1354-residue chain is Tensin homolog (1354 aa).

The Phosphatase tensin-type domain occupies 38-207 (MKDRKEGVQV…GYFSSLLSGR (170 aa)). Cys-144 serves as the catalytic Phosphocysteine intermediate. A C2 tensin-type domain is found at 212-337 (SDPLYLHNII…VTVELVVSHT (126 aa)). 7 disordered regions span residues 380–442 (EYSE…DVVP), 597–616 (STLQRRPKPPARSGSYRTLN), 638–660 (SNTAPLPPPRRQEQHAGTRSVQL), 692–720 (DVRGGQQQQQEQHNASNDFNFSNTLNNTP), 734–754 (SVTTPRNHHFSTPSREQEADA), 794–879 (AANN…DRQR), and 1015–1035 (NGERGGSGHAAGGGGGGHNGY). A compositionally biased stretch (polar residues) spans 391–401 (SSKSANPINNN). Residues 408 to 417 (VGPPVPPKPS) show a composition bias toward pro residues. Polar residues-rich tracts occupy residues 704-720 (HNASNDFNFSNTLNNTP), 734-747 (SVTTPRNHHFSTPS), and 794-804 (AANNDENQHNL). Residues 821–843 (AEFRREEERLRNTRSPYGEERWR) show a composition bias toward basic and acidic residues. Over residues 1017–1033 (ERGGSGHAAGGGGGGHN) the composition is skewed to gly residues. Positions 1083–1187 (WYKPTISREQ…ALPTKLVLPD (105 aa)) constitute an SH2 domain. One can recognise a PTB domain in the interval 1209-1353 (ACNVVYVGSV…NKVMLAQKNR (145 aa)).

The protein belongs to the PTEN phosphatase protein family. As to quaternary structure, may interact (via SH2 domain) with receptor svh-2 (when tyrosine-phosphorylated). May interact (via C-terminus) with integrin pat-3. As to expression, expressed in ventral motor neurons, including ventral and dorsal D-type neurons, and in a subset of cells in the head.

The protein localises to the cell projection. It is found in the axon. It catalyses the reaction O-phospho-L-tyrosyl-[protein] + H2O = L-tyrosyl-[protein] + phosphate. Probable phosphatase which regulates axon regeneration after injury by linking the svh-2 and integrin signaling pathways. In terms of biological role, not involved in axon regeneration after injury. The polypeptide is Tensin homolog (Caenorhabditis elegans).